A 185-amino-acid polypeptide reads, in one-letter code: Hypoxanthine/guanine phosphoribosyltransferase (185 aa).

Belongs to the purine/pyrimidine phosphoribosyltransferase family. Archaeal HPRT subfamily. In terms of assembly, homodimer.

The protein resides in the cytoplasm. The enzyme catalyses IMP + diphosphate = hypoxanthine + 5-phospho-alpha-D-ribose 1-diphosphate. The catalysed reaction is GMP + diphosphate = guanine + 5-phospho-alpha-D-ribose 1-diphosphate. Its pathway is purine metabolism; IMP biosynthesis via salvage pathway; IMP from hypoxanthine: step 1/1. In terms of biological role, catalyzes a salvage reaction resulting in the formation of IMP that is energically less costly than de novo synthesis. The polypeptide is Hypoxanthine/guanine phosphoribosyltransferase (hpt) (Methanococcus maripaludis (strain DSM 14266 / JCM 13030 / NBRC 101832 / S2 / LL)).